The sequence spans 360 residues: S-adenosylmethionine:tRNA ribosyltransferase-isomerase (360 aa).

The protein belongs to the QueA family. In terms of assembly, monomer.

The protein resides in the cytoplasm. The catalysed reaction is 7-aminomethyl-7-carbaguanosine(34) in tRNA + S-adenosyl-L-methionine = epoxyqueuosine(34) in tRNA + adenine + L-methionine + 2 H(+). It functions in the pathway tRNA modification; tRNA-queuosine biosynthesis. Transfers and isomerizes the ribose moiety from AdoMet to the 7-aminomethyl group of 7-deazaguanine (preQ1-tRNA) to give epoxyqueuosine (oQ-tRNA). The sequence is that of S-adenosylmethionine:tRNA ribosyltransferase-isomerase from Nitrobacter winogradskyi (strain ATCC 25391 / DSM 10237 / CIP 104748 / NCIMB 11846 / Nb-255).